A 439-amino-acid chain; its full sequence is Apolipoprotein N-acyltransferase (439 aa).

6 consecutive transmembrane segments (helical) span residues 13-33, 47-67, 75-95, 97-117, 149-169, and 175-195; these read LLAG…FLVF, LFSF…IPLI, FIAY…QFGL, YLLW…YTLV, NAGT…FPLF, and IFSL…ETSY. The region spanning 207 to 439 is the CN hydrolase domain; sequence IQPFVPQDVK…GSRGILLFSF (233 aa). Glu248 serves as the catalytic Proton acceptor. Residue Lys305 is part of the active site. Cys355 functions as the Nucleophile in the catalytic mechanism.

Belongs to the CN hydrolase family. Apolipoprotein N-acyltransferase subfamily.

Its subcellular location is the cell inner membrane. It catalyses the reaction N-terminal S-1,2-diacyl-sn-glyceryl-L-cysteinyl-[lipoprotein] + a glycerophospholipid = N-acyl-S-1,2-diacyl-sn-glyceryl-L-cysteinyl-[lipoprotein] + a 2-acyl-sn-glycero-3-phospholipid + H(+). Its pathway is protein modification; lipoprotein biosynthesis (N-acyl transfer). In terms of biological role, catalyzes the phospholipid dependent N-acylation of the N-terminal cysteine of apolipoprotein, the last step in lipoprotein maturation. In Aquifex aeolicus (strain VF5), this protein is Apolipoprotein N-acyltransferase.